Consider the following 152-residue polypeptide: Calmodulin (152 aa).

Ala2 is subject to N-acetylalanine. EF-hand domains are found at residues 10 to 45 (EQIA…LGQN), 46 to 81 (PTEA…KMQD), 83 to 118 (DTEE…LGEK), and 119 to 152 (LTNE…IVRN). Ca(2+) contacts are provided by Asp23, Asp25, Asp27, Ser29, Glu34, Asp59, Asp61, Asn63, Asn65, Glu70, Asp96, Asp98, Asn100, Tyr102, Glu107, Asp132, Asp134, Asp136, Gln138, and Glu143.

Belongs to the calmodulin family. As to quaternary structure, interacts with cmbB, numA/nucleomorphin, pgkA/phosphoglycerate kinase, and thyB/thymidine kinase in the presence of Ca(2+). Interacts with dwwA in the absence of Ca(2+). The N-terminus is blocked. In terms of processing, trimethylation of Lys-118 observed in other calmodulins is absent here.

Its subcellular location is the contractile vacuole. Calmodulin mediates the control of a large number of enzymes, ion channels and other proteins by Ca(2+). Among the enzymes to be stimulated by the calmodulin-Ca(2+) complex are a number of protein kinases and phosphatases. This chain is Calmodulin (calA), found in Dictyostelium discoideum (Social amoeba).